The chain runs to 122 residues: Sperm-egg fusion protein LLCFC1 (122 aa).

Positions 1–28 (MPPLAPQLCRAVFLVPILLLLQVKPLNG) are cleaved as a signal peptide. Positions 27–51 (NGSPGPKDGSQTEKTPSADQNQEQF) are disordered. A compositionally biased stretch (polar residues) spans 38–49 (TEKTPSADQNQE).

It is found in the secreted. Sperm protein required for fusion of sperm with the egg membrane during fertilization. The chain is Sperm-egg fusion protein LLCFC1 from Homo sapiens (Human).